The sequence spans 883 residues: Translation initiation factor IF-2 (883 aa).

The segment at 118-261 is disordered; that stretch reads VARESEAAPA…KKKEAFKKTE (144 aa). A compositionally biased stretch (low complexity) spans 124 to 150; that stretch reads AAPAEEPVAAAVKPASEPPVVQKAPVA. 2 stretches are compositionally biased toward basic and acidic residues: residues 183–200 and 252–261; these read PADR…EERI and KKKEAFKKTE. The tr-type G domain occupies 383–552; the sequence is KRPPVVTIMG…LLQADVMDLK (170 aa). Positions 392 to 399 are G1; that stretch reads GHVDHGKT. 392–399 contributes to the GTP binding site; that stretch reads GHVDHGKT. Residues 417-421 form a G2 region; that stretch reads GITQH. Residues 438-441 are G3; that stretch reads DTPG. GTP contacts are provided by residues 438 to 442 and 492 to 495; these read DTPGH and NKID. The tract at residues 492-495 is G4; that stretch reads NKID. Residues 528 to 530 form a G5 region; that stretch reads SAK.

This sequence belongs to the TRAFAC class translation factor GTPase superfamily. Classic translation factor GTPase family. IF-2 subfamily.

It is found in the cytoplasm. Functionally, one of the essential components for the initiation of protein synthesis. Protects formylmethionyl-tRNA from spontaneous hydrolysis and promotes its binding to the 30S ribosomal subunits. Also involved in the hydrolysis of GTP during the formation of the 70S ribosomal complex. This Geobacter sulfurreducens (strain ATCC 51573 / DSM 12127 / PCA) protein is Translation initiation factor IF-2.